We begin with the raw amino-acid sequence, 372 residues long: Tryptophan--tRNA ligase (372 aa).

Positions 79–87 (PSGKFHFGH) match the 'HIGH' region motif. The interval 247–268 (KLQPGLDGRKMSSSRPDSTIFL) is disordered. Positions 256–260 (KMSSS) match the 'KMSKS' region motif. The segment covering 257–267 (MSSSRPDSTIF) has biased composition (polar residues).

This sequence belongs to the class-I aminoacyl-tRNA synthetase family.

The protein resides in the cytoplasm. The enzyme catalyses tRNA(Trp) + L-tryptophan + ATP = L-tryptophyl-tRNA(Trp) + AMP + diphosphate + H(+). The chain is Tryptophan--tRNA ligase from Aeropyrum pernix (strain ATCC 700893 / DSM 11879 / JCM 9820 / NBRC 100138 / K1).